The primary structure comprises 589 residues: Cell fusion protein aff-1 (589 aa).

Positions methionine 1 to alanine 20 are cleaved as a signal peptide. Over arginine 21–tryptophan 537 the chain is Extracellular. N-linked (GlcNAc...) asparagine glycosylation is found at asparagine 58, asparagine 138, asparagine 205, asparagine 335, asparagine 382, asparagine 392, and asparagine 408. Residues leucine 538–phenylalanine 558 traverse the membrane as a helical segment. Residues threonine 559–tyrosine 589 are Cytoplasmic-facing.

The protein belongs to the EFF/AFF cell fusogen family. Expressed in amphid sheath cells.

The protein resides in the cell membrane. It is found in the apical cell membrane. Functionally, required for cell fusion events during development including the fusion of anchor cells (AC), vulval A and vulval D rings, and late epidermal seam cells. Required for amphid sheath cell fusion induced by entry into dauer stage. The protein is Cell fusion protein aff-1 of Caenorhabditis elegans.